A 349-amino-acid chain; its full sequence is MISVGIVGGTGYTGVELLRILLRHPKAQVRVLTSRTEAGKPVADMFPNLRGHTDLQFSDLNIDALKECDVVFFATPHGVAMQHAKDLIAAGTKVIDLAADFRLQNLEQFEKWYGMEHACPDVLKDSVYGLTELNREKIKQAQVIGNPGCYPTTVQLGLAPLLKSAQALIETKNIIIDAKSGVSGAGRKASLGMIYSENADNFKAYGVAGHRHHPEIVEALENIAGKKDVFEGLLFVPHLVPMIRGMLSTIYVDLTEAGKQTDLQALYENFYANEKFVDVMPANSSPETRSVRGANELRIALYKPQPNKLIILAAQDNLVKGASGQAVQNMNLMFGFNEDEGLQGIGLLP.

C149 is an active-site residue.

Belongs to the NAGSA dehydrogenase family. Type 1 subfamily.

The protein resides in the cytoplasm. It catalyses the reaction N-acetyl-L-glutamate 5-semialdehyde + phosphate + NADP(+) = N-acetyl-L-glutamyl 5-phosphate + NADPH + H(+). It participates in amino-acid biosynthesis; L-arginine biosynthesis; N(2)-acetyl-L-ornithine from L-glutamate: step 3/4. Its function is as follows. Catalyzes the NADPH-dependent reduction of N-acetyl-5-glutamyl phosphate to yield N-acetyl-L-glutamate 5-semialdehyde. This is N-acetyl-gamma-glutamyl-phosphate reductase from Acinetobacter baumannii (strain SDF).